A 209-amino-acid chain; its full sequence is Dehydration-responsive element-binding protein 1F (209 aa).

The short motif at 14 to 26 is the Nuclear localization signal element; it reads KKRAGRRVFKETR. The segment at residues 29-86 is a DNA-binding region (AP2/ERF); that stretch reads VYRGIRRRNGDKWVCEVREPTHQRRIWLGTYPTADMAARAHDVAVLALRGRSACLNFA. The disordered stretch occupies residues 137-157; it reads FGSGSGSGSGSEERNSSSYGF.

Belongs to the AP2/ERF transcription factor family. ERF subfamily.

It localises to the nucleus. In terms of biological role, transcriptional activator that binds specifically to the DNA sequence 5'-[AG]CCGAC-3'. Binding to the C-repeat/DRE element mediates cold or dehydration-inducible transcription. CBF/DREB1 factors play a key role in freezing tolerance and cold acclimation. The sequence is that of Dehydration-responsive element-binding protein 1F (DREB1F) from Arabidopsis thaliana (Mouse-ear cress).